Consider the following 198-residue polypeptide: uncharacterized protein (198 aa).

A run of 4 helical transmembrane segments spans residues V20–A40, F70–V90, L107–W127, and V164–A184.

This sequence to M.tuberculosis Rv1591.

It is found in the cell membrane. This is an uncharacterized protein from Mycobacterium leprae (strain TN).